We begin with the raw amino-acid sequence, 435 residues long: 3-phosphoshikimate 1-carboxyvinyltransferase (435 aa).

Residues Lys-21, Ser-22, and Arg-26 each contribute to the 3-phosphoshikimate site. Lys-21 serves as a coordination point for phosphoenolpyruvate. Residues Gly-98 and Arg-126 each contribute to the phosphoenolpyruvate site. Residues Ser-169, Ser-170, Gln-171, Ser-197, Asp-312, and Lys-339 each contribute to the 3-phosphoshikimate site. Residue Gln-171 participates in phosphoenolpyruvate binding. Asp-312 (proton acceptor) is an active-site residue. Positions 343, 386, and 412 each coordinate phosphoenolpyruvate.

This sequence belongs to the EPSP synthase family. As to quaternary structure, monomer.

The protein localises to the cytoplasm. The enzyme catalyses 3-phosphoshikimate + phosphoenolpyruvate = 5-O-(1-carboxyvinyl)-3-phosphoshikimate + phosphate. The protein operates within metabolic intermediate biosynthesis; chorismate biosynthesis; chorismate from D-erythrose 4-phosphate and phosphoenolpyruvate: step 6/7. Functionally, catalyzes the transfer of the enolpyruvyl moiety of phosphoenolpyruvate (PEP) to the 5-hydroxyl of shikimate-3-phosphate (S3P) to produce enolpyruvyl shikimate-3-phosphate and inorganic phosphate. In Clostridium beijerinckii (strain ATCC 51743 / NCIMB 8052) (Clostridium acetobutylicum), this protein is 3-phosphoshikimate 1-carboxyvinyltransferase.